Consider the following 371-residue polypeptide: GTPase Obg (371 aa).

The region spanning 1-159 (MKFLDQAKVY…KTIWLRLKLI (159 aa)) is the Obg domain. Positions 160–327 (ADAGLVGLPN…VLRALRDIIV (168 aa)) constitute an OBG-type G domain. GTP contacts are provided by residues 166 to 173 (GLPNAGKS), 191 to 195 (FTTLH), 212 to 215 (DIPG), 279 to 282 (SQID), and 308 to 310 (SAI). 2 residues coordinate Mg(2+): S173 and T193. Positions 337 to 371 (APMKALKVRHRDMQSSGNEGESEDNSDRDDEEQQG) are disordered. Acidic residues predominate over residues 356-371 (GESEDNSDRDDEEQQG).

This sequence belongs to the TRAFAC class OBG-HflX-like GTPase superfamily. OBG GTPase family. In terms of assembly, monomer. Mg(2+) is required as a cofactor.

The protein resides in the cytoplasm. Its function is as follows. An essential GTPase which binds GTP, GDP and possibly (p)ppGpp with moderate affinity, with high nucleotide exchange rates and a fairly low GTP hydrolysis rate. Plays a role in control of the cell cycle, stress response, ribosome biogenesis and in those bacteria that undergo differentiation, in morphogenesis control. This Rhizobium rhizogenes (strain K84 / ATCC BAA-868) (Agrobacterium radiobacter) protein is GTPase Obg.